A 226-amino-acid polypeptide reads, in one-letter code: MPTALEDYQKNFLELAIESKALRFGEFTLKSGRVSPYFFNLGLFNTGKLLSNLATAYAIAIIQSELKFDVIFGPAYKGIPLASIVCVKLAEIGGSKFQDVKYAFNRKEAKDHGEGGNIVGAALKDQKILIIDDVMTAGTAINEAFEIIAKEEGKVVGSIIALDRQEVVNTEDTEVLSATQSVSKRYDIPVLSIVNLSNIISYLDGRISVEEREKMEQYRQTYGASA.

Lys-30 contributes to the 5-phospho-alpha-D-ribose 1-diphosphate binding site. 38 to 39 serves as a coordination point for orotate; it reads FF. 5-phospho-alpha-D-ribose 1-diphosphate is bound by residues 76-77, Arg-106, Lys-107, Lys-110, His-112, and 132-140; these read YK and DDVMTAGTA. Residues Thr-136 and Arg-164 each contribute to the orotate site.

It belongs to the purine/pyrimidine phosphoribosyltransferase family. PyrE subfamily. In terms of assembly, homodimer.

The catalysed reaction is orotidine 5'-phosphate + diphosphate = orotate + 5-phospho-alpha-D-ribose 1-diphosphate. Its pathway is pyrimidine metabolism; UMP biosynthesis via de novo pathway; UMP from orotate: step 1/2. Catalyzes the transfer of a ribosyl phosphate group from 5-phosphoribose 1-diphosphate to orotate, leading to the formation of orotidine monophosphate (OMP). This chain is Orotate phosphoribosyltransferase (URA5), found in Kluyveromyces lactis (strain ATCC 8585 / CBS 2359 / DSM 70799 / NBRC 1267 / NRRL Y-1140 / WM37) (Yeast).